A 505-amino-acid polypeptide reads, in one-letter code: Maturase K (505 aa).

This sequence belongs to the intron maturase 2 family. MatK subfamily.

It is found in the plastid. The protein resides in the chloroplast. Functionally, usually encoded in the trnK tRNA gene intron. Probably assists in splicing its own and other chloroplast group II introns. The chain is Maturase K from Portulacaria afra (Elephant's food).